Consider the following 99-residue polypeptide: MALTLTDVKRIAHLARLEMADADAEHMLGQLNEFFGLVEQMQAVDTAGIAPLAHPIEQIQEVAQRLRDDAVTEVVNRDDNQRPAPAVQDGLYLVPKVIE.

This sequence belongs to the GatC family. As to quaternary structure, heterotrimer of A, B and C subunits.

It catalyses the reaction L-glutamyl-tRNA(Gln) + L-glutamine + ATP + H2O = L-glutaminyl-tRNA(Gln) + L-glutamate + ADP + phosphate + H(+). The enzyme catalyses L-aspartyl-tRNA(Asn) + L-glutamine + ATP + H2O = L-asparaginyl-tRNA(Asn) + L-glutamate + ADP + phosphate + 2 H(+). Its function is as follows. Allows the formation of correctly charged Asn-tRNA(Asn) or Gln-tRNA(Gln) through the transamidation of misacylated Asp-tRNA(Asn) or Glu-tRNA(Gln) in organisms which lack either or both of asparaginyl-tRNA or glutaminyl-tRNA synthetases. The reaction takes place in the presence of glutamine and ATP through an activated phospho-Asp-tRNA(Asn) or phospho-Glu-tRNA(Gln). The protein is Aspartyl/glutamyl-tRNA(Asn/Gln) amidotransferase subunit C of Burkholderia ambifaria (strain MC40-6).